Consider the following 356-residue polypeptide: DNA polymerase IV (356 aa).

In terms of domain architecture, UmuC spans 6 to 187 (IIHIDMDYFF…LDIGDFPGVG (182 aa)). The Mg(2+) site is built by aspartate 10 and aspartate 105. Glutamate 106 is an active-site residue.

The protein belongs to the DNA polymerase type-Y family. As to quaternary structure, monomer. Requires Mg(2+) as cofactor.

It is found in the cytoplasm. It catalyses the reaction DNA(n) + a 2'-deoxyribonucleoside 5'-triphosphate = DNA(n+1) + diphosphate. Functionally, poorly processive, error-prone DNA polymerase involved in untargeted mutagenesis. Copies undamaged DNA at stalled replication forks, which arise in vivo from mismatched or misaligned primer ends. These misaligned primers can be extended by PolIV. Exhibits no 3'-5' exonuclease (proofreading) activity. May be involved in translesional synthesis, in conjunction with the beta clamp from PolIII. The polypeptide is DNA polymerase IV (Staphylococcus aureus (strain COL)).